The following is a 252-amino-acid chain: Type II secretion system protein N (252 aa).

The Cytoplasmic segment spans residues 1–4 (MKNR). A helical membrane pass occupies residues 5–25 (LTIGLLLAAIYLFWLLLSAPA). Topologically, residues 26–252 (RLLALTLSDD…QGEWLSEEKK (227 aa)) are periplasmic.

The protein belongs to the GSP N family.

Its subcellular location is the cell inner membrane. Functionally, involved in a type II secretion system (T2SS, formerly general secretion pathway, GSP) for the export of proteins. Required for the translocation of pullulanase. This Klebsiella pneumoniae protein is Type II secretion system protein N (pulN).